Consider the following 157-residue polypeptide: SsrA-binding protein (157 aa).

The segment at 132–157 (VHDKRQAQKDKDWAREKDRLFKKAYK) is disordered. The span at 135 to 157 (KRQAQKDKDWAREKDRLFKKAYK) shows a compositional bias: basic and acidic residues.

Belongs to the SmpB family.

The protein resides in the cytoplasm. In terms of biological role, required for rescue of stalled ribosomes mediated by trans-translation. Binds to transfer-messenger RNA (tmRNA), required for stable association of tmRNA with ribosomes. tmRNA and SmpB together mimic tRNA shape, replacing the anticodon stem-loop with SmpB. tmRNA is encoded by the ssrA gene; the 2 termini fold to resemble tRNA(Ala) and it encodes a 'tag peptide', a short internal open reading frame. During trans-translation Ala-aminoacylated tmRNA acts like a tRNA, entering the A-site of stalled ribosomes, displacing the stalled mRNA. The ribosome then switches to translate the ORF on the tmRNA; the nascent peptide is terminated with the 'tag peptide' encoded by the tmRNA and targeted for degradation. The ribosome is freed to recommence translation, which seems to be the essential function of trans-translation. In Francisella tularensis subsp. tularensis (strain FSC 198), this protein is SsrA-binding protein.